Reading from the N-terminus, the 160-residue chain is Cyclic pyranopterin monophosphate synthase (160 aa).

Residues 75-77 (LCH) and 113-114 (ME) contribute to the substrate site. Residue Asp128 is part of the active site.

Belongs to the MoaC family. Homohexamer; trimer of dimers.

The catalysed reaction is (8S)-3',8-cyclo-7,8-dihydroguanosine 5'-triphosphate = cyclic pyranopterin phosphate + diphosphate. It participates in cofactor biosynthesis; molybdopterin biosynthesis. In terms of biological role, catalyzes the conversion of (8S)-3',8-cyclo-7,8-dihydroguanosine 5'-triphosphate to cyclic pyranopterin monophosphate (cPMP). The sequence is that of Cyclic pyranopterin monophosphate synthase from Sodalis glossinidius (strain morsitans).